Consider the following 77-residue polypeptide: Metallothionein-like protein 2B (77 aa).

This sequence belongs to the metallothionein superfamily. Type 15 family. In terms of tissue distribution, expressed in vascular tissues of all organs. Expressed in root and leaf phloem, pollen and root hairs.

Its function is as follows. Metallothioneins have a high content of cysteine residues that bind various heavy metals. Functions as a metal chelator of copper (Cu) and zinc (Zn). Functions cooperatively with the phytochelatin synthase PCS1 to protect plants from Cu and cadmium toxicity. Plays a role in Cu homeostasis, specifically in the remobilization of Cu from senescing leaves. The mobilization of Cu from internal sources is important for seed development. This is Metallothionein-like protein 2B (MT2B) from Arabidopsis thaliana (Mouse-ear cress).